The sequence spans 118 residues: Ribonuclease P protein component (118 aa).

The protein belongs to the RnpA family. As to quaternary structure, consists of a catalytic RNA component (M1 or rnpB) and a protein subunit.

It carries out the reaction Endonucleolytic cleavage of RNA, removing 5'-extranucleotides from tRNA precursor.. Its function is as follows. RNaseP catalyzes the removal of the 5'-leader sequence from pre-tRNA to produce the mature 5'-terminus. It can also cleave other RNA substrates such as 4.5S RNA. The protein component plays an auxiliary but essential role in vivo by binding to the 5'-leader sequence and broadening the substrate specificity of the ribozyme. The protein is Ribonuclease P protein component of Mycoplasma pneumoniae (strain ATCC 29342 / M129 / Subtype 1) (Mycoplasmoides pneumoniae).